A 150-amino-acid chain; its full sequence is Nitric oxide reductase subunit C (150 aa).

Residues 13-29 (IFYGGSLFFFLLFAALT) traverse the membrane as a helical; Signal-anchor segment. Cysteine 62, cysteine 65, and histidine 66 together coordinate heme c.

In terms of assembly, heterodimer of cytochromes b (large subunit) and c (small subunit).

The protein resides in the cell membrane. In terms of biological role, component of the anaerobic respiratory chain that transforms nitrate to dinitrogen (denitrification). The polypeptide is Nitric oxide reductase subunit C (norC) (Halomonas halodenitrificans (Paracoccus halodenitrificans)).